The chain runs to 435 residues: Deoxybrevianamide E synthase (435 aa).

The segment at 1 to 28 (MTAPELRAPAGHPQEPPARSSPAQALSS) is disordered. Residue E96 coordinates brevianamide F. Dimethylallyl diphosphate contacts are provided by R110, K195, Y197, K265, Y267, Y354, Y419, and Y423.

The protein belongs to the tryptophan dimethylallyltransferase family. In terms of assembly, monomer.

It catalyses the reaction brevianamide F + dimethylallyl diphosphate = deoxybrevianamide E + diphosphate. It participates in alkaloid biosynthesis. Its function is as follows. Deoxybrevianamide E synthase; part of the gene cluster that mediates the biosynthesis of notoamide, a fungal indole alkaloid that belongs to a family of natural products containing a characteristic bicyclo[2.2.2]diazaoctane core. The first step of notoamide biosynthesis involves coupling of L-proline and L-tryptophan by the bimodular NRPS notE', to produce cyclo-L-tryptophan-L-proline called brevianamide F. The reverse prenyltransferase notF' then acts as a deoxybrevianamide E synthase and converts brevianamide F to deoxybrevianamide E via reverse prenylation at C-2 of the indole ring leading to the bicyclo[2.2.2]diazaoctane core. Deoxybrevianamide E is further hydroxylated at C-6 of the indole ring, likely catalyzed by the cytochrome P450 monooxygenase notG', to yield 6-hydroxy-deoxybrevianamide E. 6-hydroxy-deoxybrevianamide E is a specific substrate of the prenyltransferase notC' for normal prenylation at C-7 to produce 6-hydroxy-7-prenyl-deoxybrevianamide, also called notoamide S. As the proposed pivotal branching point in notoamide biosynthesis, notoamide S can be diverted to notoamide E through an oxidative pyran ring closure putatively catalyzed by either notH' cytochrome P450 monooxygenase or the notD' FAD-linked oxidoreductase. This step would be followed by an indole 2,3-epoxidation-initiated pinacol-like rearrangement catalyzed by the notB' FAD-dependent monooxygenase leading to the formation of notoamide C and notoamide D. On the other hand notoamide S is converted to notoamide T by notH' (or notD'), a bifunctional oxidase that also functions as the intramolecular Diels-Alderase responsible for generation of (-)-notoamide T. To generate antipodal (+)-notoaminide T, notH (or notD) in Aspergillus strain MF297-2 is expected to catalyze a Diels-Alder reaction leading to the opposite stereochemistry. The remaining oxidoreductase notD' (or notH') likely catalyzes the oxidative pyran ring formation to yield (-)-stephacidin A. The FAD-dependent monooxygenase notI' is highly similar to notB' and is predicted to catalyze a similar conversion from (-)-stephacidin A to (+)-notoamide B via the 2,3-epoxidation of (-)-stephacidin A followed by a pinacol-type rearrangement. Finally, it remains unclear which enzyme could be responsible for the final hydroxylation steps leading to notoamide A and sclerotiamide. This is Deoxybrevianamide E synthase from Aspergillus versicolor.